We begin with the raw amino-acid sequence, 473 residues long: Probable cytosolic iron-sulfur protein assembly protein 1 (473 aa).

Positions 1-25 (MPSSTPGGSLKHLSDLTPPSQDRTW) are disordered. 2 WD repeats span residues 11 to 58 (KHLS…LLST) and 62 to 104 (GHKR…GRAE). The tract at residues 112 to 133 (GGLAEADRQEGDDTDGDEEDED) is disordered. The span at 123-133 (DDTDGDEEDED) shows a compositional bias: acidic residues. WD repeat units lie at residues 144-183 (GHDSEVKSVSWSSGGSLLATCSRDKSIWIWEDLEDGDNNF), 191-230 (EHSGDVKWVAWHPEEECLASGSYDDTIRLWREDVDDWGQV), 235-313 (GHEG…KPPP), and 341-380 (MHDLSIYSVAWSKKTGLIASTGADGRIVIYQERFTSKPPV). The tract at residues 377–405 (KPPVHTTSEQDKPDSARETQKANGERTAP) is disordered. A compositionally biased stretch (basic and acidic residues) spans 384–400 (SEQDKPDSARETQKANG). Residues 438-473 (SQQQNFDNSEMDHANEEEVLLSTGDDGVVRVWTLER) form a WD 7 repeat.

This sequence belongs to the WD repeat CIA1 family.

In terms of biological role, essential component of the cytosolic iron-sulfur (Fe/S) protein assembly machinery. Required for the maturation of extramitochondrial Fe/S proteins. The protein is Probable cytosolic iron-sulfur protein assembly protein 1 of Coccidioides immitis (strain RS) (Valley fever fungus).